A 90-amino-acid polypeptide reads, in one-letter code: Probable Fe(2+)-trafficking protein (90 aa).

Belongs to the Fe(2+)-trafficking protein family.

Functionally, could be a mediator in iron transactions between iron acquisition and iron-requiring processes, such as synthesis and/or repair of Fe-S clusters in biosynthetic enzymes. The sequence is that of Probable Fe(2+)-trafficking protein from Coxiella burnetii (strain CbuK_Q154) (Coxiella burnetii (strain Q154)).